The following is an 87-amino-acid chain: Small ribosomal subunit protein uS17 (87 aa).

This sequence belongs to the universal ribosomal protein uS17 family. Part of the 30S ribosomal subunit.

Its function is as follows. One of the primary rRNA binding proteins, it binds specifically to the 5'-end of 16S ribosomal RNA. The chain is Small ribosomal subunit protein uS17 from Bacillus pumilus (strain SAFR-032).